A 397-amino-acid polypeptide reads, in one-letter code: GDNF family receptor alpha-3 (397 aa).

Positions 1–28 (MGLSWSPRPPLLMILLLVLSLWLPLGAG) are cleaved as a signal peptide. Cysteine 48 and cysteine 54 form a disulfide bridge. N-linked (GlcNAc...) asparagine glycosylation is found at asparagine 92 and asparagine 145. Cystine bridges form between cysteine 159–cysteine 215, cysteine 166–cysteine 172, cysteine 183–cysteine 193, cysteine 188–cysteine 236, cysteine 217–cysteine 224, cysteine 245–cysteine 313, cysteine 252–cysteine 258, cysteine 269–cysteine 285, cysteine 278–cysteine 337, and cysteine 315–cysteine 325. Asparagine 306 carries N-linked (GlcNAc...) asparagine glycosylation. A lipid anchor (GPI-anchor amidated asparagine) is attached at asparagine 371. Positions 372 to 397 (PALRLQPRLPILSFSILPLILLQTLW) are cleaved as a propeptide — removed in mature form.

This sequence belongs to the GDNFR family. Interacts with ARTN ligand and RET: forms a 2:2:2 ternary complex composed of ARTN ligand, GFRA3 and RET receptor. Interacts with SORL1.

The protein resides in the cell membrane. In terms of biological role, receptor for artemin (ARTN), a growth factor that supports the survival of sensory and sympathetic peripheral neurons. ARTN-binding leads to autophosphorylation and activation of the RET receptor. The sequence is that of GDNF family receptor alpha-3 (Gfra3) from Mus musculus (Mouse).